Consider the following 88-residue polypeptide: Phosphocarrier protein HPr (88 aa).

Residues 1-88 (MASKEFHIVA…ETMTKEGLAE (88 aa)) enclose the HPr domain. Residue histidine 15 is the Pros-phosphohistidine intermediate of the active site. Serine 46 bears the Phosphoserine; by HPrK/P mark.

This sequence belongs to the HPr family.

It is found in the cytoplasm. Its activity is regulated as follows. Phosphorylation on Ser-46 inhibits the phosphoryl transfer from enzyme I to HPr. Its function is as follows. General (non sugar-specific) component of the phosphoenolpyruvate-dependent sugar phosphotransferase system (sugar PTS). This major carbohydrate active-transport system catalyzes the phosphorylation of incoming sugar substrates concomitantly with their translocation across the cell membrane. The phosphoryl group from phosphoenolpyruvate (PEP) is transferred to the phosphoryl carrier protein HPr by enzyme I. Phospho-HPr then transfers it to the PTS EIIA domain. In terms of biological role, P-Ser-HPr interacts with the catabolite control protein A (CcpA), forming a complex that binds to DNA at the catabolite response elements cre, operator sites preceding a large number of catabolite-regulated genes. Thus, P-Ser-HPr is a corepressor in carbon catabolite repression (CCR), a mechanism that allows bacteria to coordinate and optimize the utilization of available carbon sources. P-Ser-HPr also plays a role in inducer exclusion, in which it probably interacts with several non-PTS permeases and inhibits their transport activity. In Lactococcus lactis subsp. cremoris (Streptococcus cremoris), this protein is Phosphocarrier protein HPr (ptsH).